Reading from the N-terminus, the 465-residue chain is Lipase 10 (465 aa).

The signal sequence occupies residues 1 to 16; sequence MKTLLIFLAFLSSIFA. A disulfide bond links C112 and C285. Residue S196 is the Charge relay system of the active site. Residues N231 and N319 are each glycosylated (N-linked (GlcNAc...) asparagine). Residues D348 and H381 each act as charge relay system in the active site. C364 and C409 form a disulfide bridge.

This sequence belongs to the AB hydrolase superfamily. Lipase family. Class Lip subfamily.

It is found in the secreted. The enzyme catalyses a triacylglycerol + H2O = a diacylglycerol + a fatty acid + H(+). Its function is as follows. Secreted lipase that is able to hydrolyze both the neutral triacylglycerols and the monopalmitate ester Tween 40, allowing the use of hydrolyzed products as carbon sources. Has broad lipolytic activity, which may be important for colonization and subsequent infection, therefore contributing to the persistence and virulence in human tissue. This chain is Lipase 10, found in Candida albicans (strain SC5314 / ATCC MYA-2876) (Yeast).